Here is a 240-residue protein sequence, read N- to C-terminus: UDP-2,3-diacylglucosamine hydrolase (240 aa).

Residues Asp-8, His-10, Asp-41, Asn-79, and His-114 each contribute to the Mn(2+) site. Asn-79–Arg-80 is a binding site for substrate. Residues Asp-122, Ser-160, Asn-164, Lys-167, and His-195 each coordinate substrate. Positions 195 and 197 each coordinate Mn(2+).

This sequence belongs to the LpxH family. Mn(2+) is required as a cofactor.

Its subcellular location is the cell inner membrane. It catalyses the reaction UDP-2-N,3-O-bis[(3R)-3-hydroxytetradecanoyl]-alpha-D-glucosamine + H2O = 2-N,3-O-bis[(3R)-3-hydroxytetradecanoyl]-alpha-D-glucosaminyl 1-phosphate + UMP + 2 H(+). Its pathway is glycolipid biosynthesis; lipid IV(A) biosynthesis; lipid IV(A) from (3R)-3-hydroxytetradecanoyl-[acyl-carrier-protein] and UDP-N-acetyl-alpha-D-glucosamine: step 4/6. In terms of biological role, hydrolyzes the pyrophosphate bond of UDP-2,3-diacylglucosamine to yield 2,3-diacylglucosamine 1-phosphate (lipid X) and UMP by catalyzing the attack of water at the alpha-P atom. Involved in the biosynthesis of lipid A, a phosphorylated glycolipid that anchors the lipopolysaccharide to the outer membrane of the cell. The chain is UDP-2,3-diacylglucosamine hydrolase from Salmonella dublin (strain CT_02021853).